A 245-amino-acid chain; its full sequence is Acetylglutamate kinase (245 aa).

Substrate-binding positions include 41 to 42 (GG), R63, and N156.

Belongs to the acetylglutamate kinase family. ArgB subfamily.

It is found in the cytoplasm. It carries out the reaction N-acetyl-L-glutamate + ATP = N-acetyl-L-glutamyl 5-phosphate + ADP. It participates in amino-acid biosynthesis; L-arginine biosynthesis; N(2)-acetyl-L-ornithine from L-glutamate: step 2/4. Functionally, catalyzes the ATP-dependent phosphorylation of N-acetyl-L-glutamate. The sequence is that of Acetylglutamate kinase from Staphylococcus epidermidis (strain ATCC 35984 / DSM 28319 / BCRC 17069 / CCUG 31568 / BM 3577 / RP62A).